The following is a 104-amino-acid chain: Iron-sulfur cluster assembly protein CyaY (104 aa).

The protein belongs to the frataxin family.

Involved in iron-sulfur (Fe-S) cluster assembly. May act as a regulator of Fe-S biogenesis. This chain is Iron-sulfur cluster assembly protein CyaY, found in Tolumonas auensis (strain DSM 9187 / NBRC 110442 / TA 4).